The sequence spans 366 residues: Cytochrome c peroxidase, mitochondrial (366 aa).

The transit peptide at 1–46 (MASAARSASRAFLRSTPTTSSFRPAVRAARFALPAQGFRAAGRRGY) directs the protein to the mitochondrion. The active-site Proton acceptor is the His127. His250 contributes to the heme b binding site. The active-site Tryptophan radical intermediate is Trp266.

Belongs to the peroxidase family. Cytochrome c peroxidase subfamily. As to quaternary structure, forms a one-to-one complex with cytochrome c. Requires heme b as cofactor.

The protein localises to the mitochondrion matrix. The protein resides in the mitochondrion intermembrane space. The catalysed reaction is 2 Fe(II)-[cytochrome c] + H2O2 + 2 H(+) = 2 Fe(III)-[cytochrome c] + 2 H2O. In terms of biological role, destroys radicals which are normally produced within the cells and which are toxic to biological systems. In Aspergillus fumigatus (strain ATCC MYA-4609 / CBS 101355 / FGSC A1100 / Af293) (Neosartorya fumigata), this protein is Cytochrome c peroxidase, mitochondrial (ccp1).